The following is a 469-amino-acid chain: Light-independent protochlorophyllide reductase subunit N (469 aa).

[4Fe-4S] cluster-binding residues include Cys-24, Cys-49, and Cys-109.

Belongs to the BchN/ChlN family. In terms of assembly, protochlorophyllide reductase is composed of three subunits; ChlL, ChlN and ChlB. Forms a heterotetramer of two ChlB and two ChlN subunits. It depends on [4Fe-4S] cluster as a cofactor.

The enzyme catalyses chlorophyllide a + oxidized 2[4Fe-4S]-[ferredoxin] + 2 ADP + 2 phosphate = protochlorophyllide a + reduced 2[4Fe-4S]-[ferredoxin] + 2 ATP + 2 H2O. The protein operates within porphyrin-containing compound metabolism; chlorophyll biosynthesis (light-independent). Its function is as follows. Component of the dark-operative protochlorophyllide reductase (DPOR) that uses Mg-ATP and reduced ferredoxin to reduce ring D of protochlorophyllide (Pchlide) to form chlorophyllide a (Chlide). This reaction is light-independent. The NB-protein (ChlN-ChlB) is the catalytic component of the complex. The sequence is that of Light-independent protochlorophyllide reductase subunit N from Gloeobacter violaceus (strain ATCC 29082 / PCC 7421).